Consider the following 387-residue polypeptide: Cytochrome b (387 aa).

Helical transmembrane passes span 32-52, 76-98, 113-133, and 179-199; these read FGSL…TLAM, WLVR…LHIG, VWAI…LGYV, and FFAL…MHLI. 2 residues coordinate heme b: His82 and His96. His183 and His197 together coordinate heme b. An a ubiquinone-binding site is contributed by His202. 4 consecutive transmembrane segments (helical) span residues 226–246, 290–310, 322–342, and 349–369; these read YLFK…SFVF, LLGV…PITD, LSKF…KLGA, and FIEL…IIVP.

The protein belongs to the cytochrome b family. In terms of assembly, fungal cytochrome b-c1 complex contains 10 subunits; 3 respiratory subunits, 2 core proteins and 5 low-molecular weight proteins. Cytochrome b-c1 complex is a homodimer. Requires heme b as cofactor.

It localises to the mitochondrion inner membrane. Functionally, component of the ubiquinol-cytochrome c reductase complex (complex III or cytochrome b-c1 complex) that is part of the mitochondrial respiratory chain. The b-c1 complex mediates electron transfer from ubiquinol to cytochrome c. Contributes to the generation of a proton gradient across the mitochondrial membrane that is then used for ATP synthesis. The protein is Cytochrome b (COB) of Podospora anserina (strain S / ATCC MYA-4624 / DSM 980 / FGSC 10383) (Pleurage anserina).